The sequence spans 1252 residues: Plasma membrane calcium-transporting ATPase mca-1 (1252 aa).

Residues Met-1–Asp-121 are Cytoplasmic-facing. A helical transmembrane segment spans residues Pro-122 to Pro-142. Residues Thr-143–Thr-180 are Extracellular-facing. Asn-155 and Asn-164 each carry an N-linked (GlcNAc...) asparagine glycan. A helical membrane pass occupies residues Ala-181 to Val-201. At Asn-202–Lys-376 the chain is on the cytoplasmic side. Residues Asp-330–Asp-361 are disordered. Residues Thr-333 to Ser-357 are compositionally biased toward low complexity. The helical transmembrane segment at Leu-377–Val-397 threads the bilayer. Residues Thr-398 to Lys-422 lie on the Extracellular side of the membrane. Residues Phe-423–Ile-443 traverse the membrane as a helical segment. Residues Val-432, Ile-435, and Glu-437 each contribute to the Ca(2+) site. The Cytoplasmic portion of the chain corresponds to Ala-444–Lys-879. Residue Asp-479 is the 4-aspartylphosphate intermediate of the active site. Positions 479 and 481 each coordinate Mg(2+). Residues Thr-481, Glu-553, Lys-612, Thr-733, Gly-734, Asp-735, Arg-792, and Lys-798 each contribute to the ATP site. Asp-822 is a binding site for Mg(2+). Residue Asn-825 participates in ATP binding. The chain crosses the membrane as a helical span at residues Phe-880 to Val-900. A Ca(2+)-binding site is contributed by Asn-888. The Extracellular segment spans residues Thr-901 to Lys-908. A helical membrane pass occupies residues Ala-909–Thr-929. Positions 916 and 920 each coordinate Ca(2+). The Cytoplasmic portion of the chain corresponds to Glu-930–His-960. The chain crosses the membrane as a helical span at residues Ala-961 to Ile-981. Topologically, residues Lys-982 to Leu-989 are extracellular. A helical membrane pass occupies residues Phe-990–Phe-1010. Topologically, residues Asn-1011–Cys-1035 are cytoplasmic. The helical transmembrane segment at Val-1036–Phe-1056 threads the bilayer. Over Ser-1057–Gln-1065 the chain is Extracellular. Residues Trp-1066–Ile-1086 traverse the membrane as a helical segment. Residues Pro-1087–Asn-1252 lie on the Cytoplasmic side of the membrane. The interval Leu-1124–His-1142 is calmodulin-binding subdomain A. A calmodulin-binding subdomain B region spans residues Leu-1143 to Glu-1152. The interval Tyr-1181 to Asn-1252 is disordered.

Belongs to the cation transport ATPase (P-type) (TC 3.A.3) family. Type IIB subfamily. Interacts with calmodulin.

It localises to the cell membrane. It carries out the reaction Ca(2+)(in) + ATP + H2O = Ca(2+)(out) + ADP + phosphate + H(+). Its function is as follows. Catalyzes the hydrolysis of ATP coupled with the transport of calcium across a membrane. The sequence is that of Plasma membrane calcium-transporting ATPase mca-1 from Caenorhabditis elegans.